The chain runs to 268 residues: Pantothenate synthetase (268 aa).

18–25 (MGYLHEGH) lines the ATP pocket. Histidine 25 functions as the Proton donor in the catalytic mechanism. Residue glutamine 49 coordinates (R)-pantoate. Glutamine 49 contacts beta-alanine. Residue 135–138 (GQKD) coordinates ATP. Glutamine 141 contacts (R)-pantoate. Residues isoleucine 164 and 172–175 (LSSR) each bind ATP.

It belongs to the pantothenate synthetase family. Homodimer.

The protein localises to the cytoplasm. The catalysed reaction is (R)-pantoate + beta-alanine + ATP = (R)-pantothenate + AMP + diphosphate + H(+). It functions in the pathway cofactor biosynthesis; (R)-pantothenate biosynthesis; (R)-pantothenate from (R)-pantoate and beta-alanine: step 1/1. Functionally, catalyzes the condensation of pantoate with beta-alanine in an ATP-dependent reaction via a pantoyl-adenylate intermediate. The chain is Pantothenate synthetase from Dehalococcoides mccartyi (strain CBDB1).